A 130-amino-acid chain; its full sequence is Large ribosomal subunit protein bL12 (130 aa).

It belongs to the bacterial ribosomal protein bL12 family. Homodimer. Part of the ribosomal stalk of the 50S ribosomal subunit. Forms a multimeric L10(L12)X complex, where L10 forms an elongated spine to which 2 to 4 L12 dimers bind in a sequential fashion. Binds GTP-bound translation factors.

Its function is as follows. Forms part of the ribosomal stalk which helps the ribosome interact with GTP-bound translation factors. Is thus essential for accurate translation. This chain is Large ribosomal subunit protein bL12, found in Parafrankia sp. (strain EAN1pec).